The sequence spans 530 residues: Purine-cytosine permease FCY22 (530 aa).

T46 bears the Phosphothreonine mark. 12 consecutive transmembrane segments (helical) span residues 96–116 (MVIV…LNFG), 119–139 (VLVI…FSLF), 162–182 (FFSL…ISVS), 197–217 (CPIW…TFFG), 220–240 (VVHA…LVII), 263–283 (GVLS…TYAA), 298–318 (IFFS…ILGA), 345–365 (AILV…LLAL), 372–392 (VPGM…LAKI), 396–416 (VWTM…TYYF), 418–438 (GFME…IAIA), and 463–483 (LPIG…VALG).

This sequence belongs to the purine-cytosine permease (2.A.39) family.

It is found in the membrane. Functionally, probable purine-cytosine permease. The sequence is that of Purine-cytosine permease FCY22 (FCY22) from Saccharomyces cerevisiae (strain ATCC 204508 / S288c) (Baker's yeast).